Here is a 142-residue protein sequence, read N- to C-terminus: Large ribosomal subunit protein uL11 (142 aa).

Belongs to the universal ribosomal protein uL11 family. In terms of assembly, part of the ribosomal stalk of the 50S ribosomal subunit. Interacts with L10 and the large rRNA to form the base of the stalk. L10 forms an elongated spine to which L12 dimers bind in a sequential fashion forming a multimeric L10(L12)X complex. One or more lysine residues are methylated.

Forms part of the ribosomal stalk which helps the ribosome interact with GTP-bound translation factors. This chain is Large ribosomal subunit protein uL11, found in Nitrobacter winogradskyi (strain ATCC 25391 / DSM 10237 / CIP 104748 / NCIMB 11846 / Nb-255).